We begin with the raw amino-acid sequence, 20 residues long: Cytochrome c oxidase subunit 7B-heart, mitochondrial (20 aa).

This sequence belongs to the cytochrome c oxidase VIIb family. As to quaternary structure, component of the cytochrome c oxidase (complex IV, CIV), a multisubunit enzyme composed of 14 subunits. The complex is composed of a catalytic core of 3 subunits MT-CO1, MT-CO2 and MT-CO3, encoded in the mitochondrial DNA, and 11 supernumerary subunits COX4I, COX5A, COX5B, COX6A, COX6B, COX6C, COX7A, COX7B, COX7C, COX8 and NDUFA4, which are encoded in the nuclear genome. The complex exists as a monomer or a dimer and forms supercomplexes (SCs) in the inner mitochondrial membrane with NADH-ubiquinone oxidoreductase (complex I, CI) and ubiquinol-cytochrome c oxidoreductase (cytochrome b-c1 complex, complex III, CIII), resulting in different assemblies (supercomplex SCI(1)III(2)IV(1) and megacomplex MCI(2)III(2)IV(2)).

The protein resides in the mitochondrion inner membrane. It catalyses the reaction 4 Fe(II)-[cytochrome c] + O2 + 8 H(+)(in) = 4 Fe(III)-[cytochrome c] + 2 H2O + 4 H(+)(out). The protein operates within energy metabolism; oxidative phosphorylation. In terms of biological role, component of the cytochrome c oxidase, the last enzyme in the mitochondrial electron transport chain which drives oxidative phosphorylation. The respiratory chain contains 3 multisubunit complexes succinate dehydrogenase (complex II, CII), ubiquinol-cytochrome c oxidoreductase (cytochrome b-c1 complex, complex III, CIII) and cytochrome c oxidase (complex IV, CIV), that cooperate to transfer electrons derived from NADH and succinate to molecular oxygen, creating an electrochemical gradient over the inner membrane that drives transmembrane transport and the ATP synthase. Cytochrome c oxidase is the component of the respiratory chain that catalyzes the reduction of oxygen to water. Electrons originating from reduced cytochrome c in the intermembrane space (IMS) are transferred via the dinuclear copper A center (CU(A)) of subunit 2 and heme A of subunit 1 to the active site in subunit 1, a binuclear center (BNC) formed by heme A3 and copper B (CU(B)). The BNC reduces molecular oxygen to 2 water molecules using 4 electrons from cytochrome c in the IMS and 4 protons from the mitochondrial matrix. This is Cytochrome c oxidase subunit 7B-heart, mitochondrial from Thunnus obesus (Bigeye tuna).